The following is a 387-amino-acid chain: Postreplication repair E3 ubiquitin-protein ligase rad18 (387 aa).

The segment at 29–67 adopts an RING-type zinc-finger fold; sequence CLICHEYFRAPLITSCSHTFCSFCIRDYLREHPMCPACR. Residues 119–153 form a disordered region; it reads DSASGDEEWEDDLASNSSPASIAKKTSRDSKKRKR. Positions 122-131 are enriched in acidic residues; that stretch reads SGDEEWEDDL. The UBZ4-type zinc-finger motif lies at 156-183; that stretch reads LVHCPACSNLVPHNQINQHLDSCLNSPS. Cys-159, Cys-162, His-174, and Cys-178 together coordinate Zn(2+). Residues 174–206 are disordered; the sequence is HLDSCLNSPSSPSSSSSPYKNKDNSKSNSLLSF. Residues 177–192 show a composition bias toward low complexity; that stretch reads SCLNSPSSPSSSSSPY. In terms of domain architecture, SAP spans 240–274; the sequence is YALLSESKIRSKLSEMGLPTDGHKQLLQRRHAKWV. Positions 335–387 are disordered; that stretch reads KQSTTNKNDSLRNTAVESSTEPSTSNGFPATSVSPPLTIDLTNSQTGSDGPQS.

It belongs to the RAD18 family. As to quaternary structure, interacts with E2 ubc2, forming a complex with ubiquitin ligase activity.

The protein resides in the nucleus. It catalyses the reaction S-ubiquitinyl-[E2 ubiquitin-conjugating enzyme]-L-cysteine + [acceptor protein]-L-lysine = [E2 ubiquitin-conjugating enzyme]-L-cysteine + N(6)-ubiquitinyl-[acceptor protein]-L-lysine.. It participates in protein modification; protein ubiquitination. E3 RING-finger protein, member of the UBC2/RAD6 epistasis group. Associates to the E2 ubiquitin conjugating enzyme ubc2/rad6 to form the ubc2-rad18 ubiquitin ligase complex involved in postreplicative repair (PRR) of damaged DNA. The chain is Postreplication repair E3 ubiquitin-protein ligase rad18 (rhp18) from Schizosaccharomyces pombe (strain 972 / ATCC 24843) (Fission yeast).